The sequence spans 241 residues: Small ribosomal subunit protein uS2 (241 aa).

It belongs to the universal ribosomal protein uS2 family.

In Shigella flexneri serotype 5b (strain 8401), this protein is Small ribosomal subunit protein uS2.